We begin with the raw amino-acid sequence, 462 residues long: MNTSPRTLKTIAILGQPNVGKSSLFNRLAKERIAITSDFVGTTRDINKRKITLNGHEVELLDTGGMAKDAFLSKEIKAFNLKAAQMSDLILYVVDGKSIPSDEDIKLFREIFKINPNCFLVINKIDNDKEKERSYAFSSFGMPKSFNISVSHNRGISALIDAILDALGLTKIIEQDLDIDILESLETPNNTEDGNNEEEIIQVGIIGRVNVGKSSLLNVLTQKERSIVSSVAGTTIDPIDETILVKNQKICFVDTAGIRHKGKILGIEKYALERTQKALEKSHIALLVLDVSAPFVELDEKISSLADKHSLGIILILNKWDIRYAPYEEIMATLKRKFRFLEYAPVITTSCLKTRHIEEIKHKIIEVYECFSKRIPTSLLNSVISQATQKHPLPSDGGKLVKVYYATQFATKPPQISLVMNRPKALHFSYKRYLINTLRKEFNFLGTPLIINAKDKKSVQQN.

EngA-type G domains lie at 9–171 (KTIA…GLTK) and 201–372 (IQVG…ECFS). Residues 15-22 (GQPNVGKS), 62-66 (DTGGM), 123-126 (NKID), 207-214 (GRVNVGKS), 254-258 (DTAGI), and 318-321 (NKWD) contribute to the GTP site. Residues 373-457 (KRIPTSLLNS…PLIINAKDKK (85 aa)) enclose the KH-like domain.

Belongs to the TRAFAC class TrmE-Era-EngA-EngB-Septin-like GTPase superfamily. EngA (Der) GTPase family. As to quaternary structure, associates with the 50S ribosomal subunit.

In terms of biological role, GTPase that plays an essential role in the late steps of ribosome biogenesis. The sequence is that of GTPase Der from Helicobacter acinonychis (strain Sheeba).